Here is a 66-residue protein sequence, read N- to C-terminus: MTEFPKIIMILGAVLLIIGAVLHFVGKMPGDIFVKKGNVTFFFPVVTCIIISVVLSILLNLFGRMK.

2 helical membrane passes run 6 to 26 (KIIMILGAVLLIIGAVLHFVG) and 39 to 59 (VTFFFPVVTCIIISVVLSILL).

Its subcellular location is the cell membrane. This is an uncharacterized protein from Bacillus subtilis (strain 168).